A 576-amino-acid polypeptide reads, in one-letter code: Sulfite reductase [NADPH] hemoprotein beta-component (576 aa).

The [4Fe-4S] cluster site is built by cysteine 439, cysteine 445, cysteine 485, and cysteine 489. Cysteine 489 contributes to the siroheme binding site.

The protein belongs to the nitrite and sulfite reductase 4Fe-4S domain family. In terms of assembly, alpha(8)-beta(8). The alpha component is a flavoprotein, the beta component is a hemoprotein. Siroheme serves as cofactor. Requires [4Fe-4S] cluster as cofactor.

It catalyses the reaction hydrogen sulfide + 3 NADP(+) + 3 H2O = sulfite + 3 NADPH + 4 H(+). The protein operates within sulfur metabolism; hydrogen sulfide biosynthesis; hydrogen sulfide from sulfite (NADPH route): step 1/1. In terms of biological role, component of the sulfite reductase complex that catalyzes the 6-electron reduction of sulfite to sulfide. This is one of several activities required for the biosynthesis of L-cysteine from sulfate. This chain is Sulfite reductase [NADPH] hemoprotein beta-component, found in Aliivibrio fischeri (strain ATCC 700601 / ES114) (Vibrio fischeri).